Reading from the N-terminus, the 330-residue chain is Delta-aminolevulinic acid dehydratase (330 aa).

4 residues coordinate Zn(2+): C122, C124, H131, and C132. K199 functions as the Schiff-base intermediate with substrate in the catalytic mechanism. K199 is modified (N6-succinyllysine). Position 209 (R209) interacts with 5-aminolevulinate. The residue at position 215 (S215) is a Phosphoserine. Residue R221 coordinates 5-aminolevulinate. C223 is a Zn(2+) binding site. Residue K252 is the Schiff-base intermediate with substrate of the active site. Position 252 is an N6-succinyllysine (K252). S279 contacts 5-aminolevulinate.

It belongs to the ALAD family. As to quaternary structure, homooctamer; active form. Homohexamer; low activity form. Zn(2+) is required as a cofactor.

The protein localises to the cytoplasm. It localises to the cytosol. The enzyme catalyses 2 5-aminolevulinate = porphobilinogen + 2 H2O + H(+). Its pathway is porphyrin-containing compound metabolism; protoporphyrin-IX biosynthesis; coproporphyrinogen-III from 5-aminolevulinate: step 1/4. Can alternate between a fully active homooctamer and a low-activity homohexamer. A bound magnesium ion may promote the assembly of the fully active homooctamer. The magnesium-binding site is absent in the low-activity homohexamer. Inhibited by compounds that favor the hexameric state. Inhibited by divalent lead ions. The lead ions partially displace the zinc cofactor. Functionally, catalyzes an early step in the biosynthesis of tetrapyrroles. Binds two molecules of 5-aminolevulinate per subunit, each at a distinct site, and catalyzes their condensation to form porphobilinogen. In Pongo abelii (Sumatran orangutan), this protein is Delta-aminolevulinic acid dehydratase (ALAD).